We begin with the raw amino-acid sequence, 433 residues long: Bifunctional protein GlmU (433 aa).

The segment at 1–226 (MLSVIILAAG…EECFLGVNSQ (226 aa)) is pyrophosphorylase. Residues 7–10 (LAAG), Lys21, and 80–81 (GT) each bind UDP-N-acetyl-alpha-D-glucosamine. Mg(2+) is bound at residue Asp106. The UDP-N-acetyl-alpha-D-glucosamine site is built by Gly138, Glu152, Asn167, and Asn224. Asn224 is a Mg(2+) binding site. Residues 227–247 (TERAKAEEIMLERLRKNAMDL) form a linker region. The N-acetyltransferase stretch occupies residues 248–433 (GVVMQLPSSI…NGYFKFFKKP (186 aa)). The UDP-N-acetyl-alpha-D-glucosamine site is built by Arg311 and Lys328. Residue His339 is the Proton acceptor of the active site. 2 residues coordinate UDP-N-acetyl-alpha-D-glucosamine: Tyr342 and Asn353. Residues Ala356, 362–363 (NY), Ser381, Ser399, and Arg416 contribute to the acetyl-CoA site.

The protein in the N-terminal section; belongs to the N-acetylglucosamine-1-phosphate uridyltransferase family. This sequence in the C-terminal section; belongs to the transferase hexapeptide repeat family. As to quaternary structure, homotrimer. The cofactor is Mg(2+).

The protein localises to the cytoplasm. It carries out the reaction alpha-D-glucosamine 1-phosphate + acetyl-CoA = N-acetyl-alpha-D-glucosamine 1-phosphate + CoA + H(+). It catalyses the reaction N-acetyl-alpha-D-glucosamine 1-phosphate + UTP + H(+) = UDP-N-acetyl-alpha-D-glucosamine + diphosphate. It participates in nucleotide-sugar biosynthesis; UDP-N-acetyl-alpha-D-glucosamine biosynthesis; N-acetyl-alpha-D-glucosamine 1-phosphate from alpha-D-glucosamine 6-phosphate (route II): step 2/2. It functions in the pathway nucleotide-sugar biosynthesis; UDP-N-acetyl-alpha-D-glucosamine biosynthesis; UDP-N-acetyl-alpha-D-glucosamine from N-acetyl-alpha-D-glucosamine 1-phosphate: step 1/1. The protein operates within bacterial outer membrane biogenesis; LPS lipid A biosynthesis. In terms of biological role, catalyzes the last two sequential reactions in the de novo biosynthetic pathway for UDP-N-acetylglucosamine (UDP-GlcNAc). The C-terminal domain catalyzes the transfer of acetyl group from acetyl coenzyme A to glucosamine-1-phosphate (GlcN-1-P) to produce N-acetylglucosamine-1-phosphate (GlcNAc-1-P), which is converted into UDP-GlcNAc by the transfer of uridine 5-monophosphate (from uridine 5-triphosphate), a reaction catalyzed by the N-terminal domain. In Helicobacter pylori (strain HPAG1), this protein is Bifunctional protein GlmU.